We begin with the raw amino-acid sequence, 278 residues long: GRGNSIKHLRHENIISLLDVFISPGEDIYFITELLGTDLHRLLSSRPLERQFVQYFLYQMLRALKFVHPAGVVHRDLKPSNILINENCDLKICDFGLARLQDPQMTGYVSTRYYRAPEIMLTWQEYDSAVDIWSIGCIFAEMIDGRPIFPGKDHVHQLTVITELLGSPPEDVINTITSENTRRFVDALPKREKIPFQQRFPNANEEEIDLLEKMLDFNPKERITAADAIQHPYLAPYHDPSDEPVANERFDWSFNDADLPVDQWKVMMYSEILITSEF.

Residues 1-234 enclose the Protein kinase domain; that stretch reads GRGNSIKHLR…AADAIQHPYL (234 aa). Residue threonine 106 is modified to Phosphothreonine. A TXY motif is present at residues 106 to 108; the sequence is TGY. A Phosphotyrosine modification is found at tyrosine 108.

The protein belongs to the protein kinase superfamily. Ser/Thr protein kinase family. MAP kinase subfamily. HOG1 sub-subfamily. Mg(2+) is required as a cofactor. Dually phosphorylated on Thr-106 and Tyr-108, which activates the enzyme.

The protein localises to the cytoplasm. Its subcellular location is the nucleus. It catalyses the reaction L-seryl-[protein] + ATP = O-phospho-L-seryl-[protein] + ADP + H(+). It carries out the reaction L-threonyl-[protein] + ATP = O-phospho-L-threonyl-[protein] + ADP + H(+). Activated by tyrosine and threonine phosphorylation. In terms of biological role, proline-directed serine/threonine-protein kinase involved in a signal transduction pathway that is activated by changes in the osmolarity of the extracellular environment. Controls osmotic regulation of transcription of target genes. The chain is Mitogen-activated protein kinase HOG1 (HOG1) from Wallemia muriae.